We begin with the raw amino-acid sequence, 308 residues long: 1,4-dihydroxy-2-naphthoate octaprenyltransferase (308 aa).

Topologically, residues 1–20 (MTEQQISRTQAWLESLRPKT) are cytoplasmic. Residues 21-41 (LPLAFAAIIVGTALAWWQGHF) traverse the membrane as a helical segment. A topological domain (periplasmic) is located at residue D42. A helical transmembrane segment spans residues 43-63 (PLVALLALITAGLLQILSNLA). The Cytoplasmic portion of the chain corresponds to 64–97 (NDYGDAVKGSDKPDRIGPLRGMQKGVITQQEMKR). Residues 98 to 118 (ALIITVVLICLSGLALVAVAC) traverse the membrane as a helical segment. Residues 119–123 (HTLAD) are Periplasmic-facing. The chain crosses the membrane as a helical span at residues 124 to 144 (FVGFLILGGLSIIAAITYTVG). Residues 145–148 (NRPY) are Cytoplasmic-facing. The chain crosses the membrane as a helical span at residues 149–169 (GYIGLGDISVLVFFGWLSVMG). Over 170-176 (SWYLQAH) the chain is Periplasmic. Residues 177–197 (TLIPALILPATACGLLATAVL) form a helical membrane-spanning segment. Residues 198–227 (NINNLRDINSDRENGKNTLVVRLGEVNARR) are Cytoplasmic-facing. The helical transmembrane segment at 228 to 247 (YHACLLMGSLVCLALFNLFS) threads the bilayer. Topologically, residues 248-250 (LHS) are periplasmic. Residues 251-270 (LWGWLFLLAAPLLVKQARYV) form a helical membrane-spanning segment. At 271-286 (MREMDPVAMRPMLERT) the chain is on the cytoplasmic side. A helical membrane pass occupies residues 287 to 307 (VKGALLTNLLFVLGIFLSQWA). A topological domain (periplasmic) is located at residue A308.

Belongs to the MenA family. Type 1 subfamily.

The protein resides in the cell inner membrane. It carries out the reaction an all-trans-polyprenyl diphosphate + 1,4-dihydroxy-2-naphthoate + H(+) = a 2-demethylmenaquinol + CO2 + diphosphate. It participates in quinol/quinone metabolism; menaquinone biosynthesis; menaquinol from 1,4-dihydroxy-2-naphthoate: step 1/2. Conversion of 1,4-dihydroxy-2-naphthoate (DHNA) to demethylmenaquinone (DMK). Attaches octaprenylpyrophosphate, a membrane-bound 40-carbon side chain to DHNA. The conversion of DHNA to DMK proceeds in three stages: the removal of the carboxyl group of DHNA as CO(2), the attachment of the isoprenoid side chain, and a quinol-to-quinone oxidation, which is thought to be spontaneous. This chain is 1,4-dihydroxy-2-naphthoate octaprenyltransferase, found in Escherichia coli (strain K12).